Consider the following 248-residue polypeptide: Anamorsin homolog (248 aa).

The interval 4–129 (FKGLQKSLYI…ETGSSARLSF (126 aa)) is N-terminal SAM-like domain. The tract at residues 130–161 (AKKNANAANVWKISGDDEELIDEEELLDEEDK) is linker. Residues Cys172, Cys181, Cys184, and Cys186 each coordinate [2Fe-2S] cluster. The fe-S binding site A stretch occupies residues 172 to 186 (CSTTGKRKACKNCSC). Residues Cys209, Cys212, Cys220, and Cys223 each contribute to the [4Fe-4S] cluster site. Short sequence motifs (cx2C motif) lie at residues 209 to 212 (CGNC) and 220 to 223 (CSTC). The tract at residues 209–223 (CGNCYLGDAFRCSTC) is fe-S binding site B.

It belongs to the anamorsin family. As to quaternary structure, monomer. Requires [2Fe-2S] cluster as cofactor. [4Fe-4S] cluster serves as cofactor.

It localises to the cytoplasm. Its subcellular location is the mitochondrion intermembrane space. Its function is as follows. Component of the cytosolic iron-sulfur (Fe-S) protein assembly (CIA) machinery. Required for the maturation of extramitochondrial Fe-S proteins. Part of an electron transfer chain functioning in an early step of cytosolic Fe-S biogenesis, facilitating the de novo assembly of a [4Fe-4S] cluster on the cytosolic Fe-S scaffold complex. Electrons are transferred from NADPH via a FAD- and FMN-containing diflavin oxidoreductase. Together with the diflavin oxidoreductase, also required for the assembly of the diferric tyrosyl radical cofactor of ribonucleotide reductase (RNR), probably by providing electrons for reduction during radical cofactor maturation in the catalytic small subunit. This Drosophila sechellia (Fruit fly) protein is Anamorsin homolog.